Reading from the N-terminus, the 186-residue chain is Peptidyl-tRNA hydrolase (186 aa).

A tRNA-binding site is contributed by Y14. The active-site Proton acceptor is H19. TRNA contacts are provided by Y60 and N62.

Belongs to the PTH family. As to quaternary structure, monomer.

It is found in the cytoplasm. It catalyses the reaction an N-acyl-L-alpha-aminoacyl-tRNA + H2O = an N-acyl-L-amino acid + a tRNA + H(+). Functionally, hydrolyzes ribosome-free peptidyl-tRNAs (with 1 or more amino acids incorporated), which drop off the ribosome during protein synthesis, or as a result of ribosome stalling. In terms of biological role, catalyzes the release of premature peptidyl moieties from peptidyl-tRNA molecules trapped in stalled 50S ribosomal subunits, and thus maintains levels of free tRNAs and 50S ribosomes. This Mycoplasmopsis pulmonis (strain UAB CTIP) (Mycoplasma pulmonis) protein is Peptidyl-tRNA hydrolase.